The chain runs to 296 residues: Biliverdin reductase A (296 aa).

The propeptide occupies 1–2; it reads MN. Residues 16 to 19, 44 to 46, 77 to 80, and tyrosine 98 contribute to the NADP(+) site; these read VGRA, SRR, and SSSH. Threonine 174 bears the Phosphothreonine mark. Phosphoserine occurs at positions 178 and 230. An N6-acetyllysine mark is found at lysine 248 and lysine 253. Zn(2+) contacts are provided by histidine 280, cysteine 281, cysteine 292, and cysteine 293.

This sequence belongs to the Gfo/Idh/MocA family. Biliverdin reductase subfamily. Monomer. It depends on Zn(2+) as a cofactor. Liver.

It is found in the cytoplasm. The protein localises to the cytosol. The enzyme catalyses (4Z,15Z)-bilirubin IXalpha + NAD(+) = biliverdin IXalpha + NADH + H(+). It carries out the reaction (4Z,15Z)-bilirubin IXalpha + NADP(+) = biliverdin IXalpha + NADPH + H(+). Its pathway is porphyrin-containing compound metabolism; protoheme degradation. Reduces the gamma-methene bridge of the open tetrapyrrole, biliverdin IXalpha, to bilirubin with the concomitant oxidation of a NADH or NADPH cofactor. Does not reduce bilirubin IXbeta. Uses the reactants NADH or NADPH depending on the pH; NADH is used at the acidic pH range (6-6.9) and NADPH at the alkaline range (8.5-8.7). NADPH, however, is the probable reactant in biological systems. This is Biliverdin reductase A from Homo sapiens (Human).